A 29-amino-acid polypeptide reads, in one-letter code: Cytochrome b6-f complex subunit 8 (29 aa).

Residues threonine 3–valine 23 form a helical membrane-spanning segment.

This sequence belongs to the PetN family. As to quaternary structure, the 4 large subunits of the cytochrome b6-f complex are cytochrome b6, subunit IV (17 kDa polypeptide, PetD), cytochrome f and the Rieske protein, while the 4 small subunits are PetG, PetL, PetM and PetN. The complex functions as a dimer.

The protein localises to the plastid. Its subcellular location is the chloroplast thylakoid membrane. In terms of biological role, component of the cytochrome b6-f complex, which mediates electron transfer between photosystem II (PSII) and photosystem I (PSI), cyclic electron flow around PSI, and state transitions. The sequence is that of Cytochrome b6-f complex subunit 8 from Psilotum nudum (Whisk fern).